Here is a 78-residue protein sequence, read N- to C-terminus: Hainantoxin-XX.2 (78 aa).

The first 23 residues, 1–23, serve as a signal peptide directing secretion; sequence MKSATLLALSYLLIALYFLICEA. Positions 24–47 are excised as a propeptide; it reads EHSRYEEHEILEENMGDVVNLEQR. Cystine bridges form between cysteine 49–cysteine 62, cysteine 56–cysteine 66, and cysteine 61–cysteine 77.

The protein belongs to the hainantoxin family. 20 subfamily. As to expression, expressed by the venom gland.

The protein localises to the secreted. Functionally, moderately inhibits Kv1.1/KCNA1 and Kv1.2/KCNA2 and weakly inhibits Kv1.3/KCNA3, and Kv2.1/KCNB1 voltage-gated potassium channels. The polypeptide is Hainantoxin-XX.2 (Cyriopagopus hainanus (Chinese bird spider)).